Reading from the N-terminus, the 682-residue chain is Methionine--tRNA ligase (682 aa).

The 'HIGH' region signature appears at 14-24; that stretch reads PYANGSIHLGH. Residues Cys-145, Cys-148, Cys-158, and Cys-161 each coordinate Zn(2+). The 'KMSKS' region signature appears at 331 to 335; sequence KMSKS. Residue Lys-334 participates in ATP binding. The region spanning 580–682 is the tRNA-binding domain; sequence AFAAIDLRVA…SGARPGQRIK (103 aa).

Belongs to the class-I aminoacyl-tRNA synthetase family. MetG type 1 subfamily. Homodimer. It depends on Zn(2+) as a cofactor.

It is found in the cytoplasm. The catalysed reaction is tRNA(Met) + L-methionine + ATP = L-methionyl-tRNA(Met) + AMP + diphosphate. Its function is as follows. Is required not only for elongation of protein synthesis but also for the initiation of all mRNA translation through initiator tRNA(fMet) aminoacylation. In Pseudomonas syringae pv. syringae (strain B728a), this protein is Methionine--tRNA ligase.